The chain runs to 758 residues: Translation initiation factor IF-2 (758 aa).

Residues 55-168 (EKNVGKQATQ…KTHQPSIPVK (114 aa)) form a disordered region. Composition is skewed to polar residues over residues 60 to 78 (KQATQNISQKSQSNGQQNH) and 86 to 95 (QRQQSATSKP). The span at 96–136 (KVNNQQHSNSSNEKSKNTKGNQNRNMTQNNNNNNNNNNNNR) shows a compositional bias: low complexity. A tr-type G domain is found at 259–428 (ERPPVVTIMG…LLVAEVGELK (170 aa)). The tract at residues 268 to 275 (GHVDHGKT) is G1. 268-275 (GHVDHGKT) serves as a coordination point for GTP. The interval 293 to 297 (GITQH) is G2. The segment at 314-317 (DTPG) is G3. Residues 314–318 (DTPGH) and 368–371 (NKMD) each bind GTP. The G4 stretch occupies residues 368 to 371 (NKMD). The segment at 404-406 (SAL) is G5.

This sequence belongs to the TRAFAC class translation factor GTPase superfamily. Classic translation factor GTPase family. IF-2 subfamily.

Its subcellular location is the cytoplasm. In terms of biological role, one of the essential components for the initiation of protein synthesis. Protects formylmethionyl-tRNA from spontaneous hydrolysis and promotes its binding to the 30S ribosomal subunits. Also involved in the hydrolysis of GTP during the formation of the 70S ribosomal complex. This Lysinibacillus sphaericus (strain C3-41) protein is Translation initiation factor IF-2.